Reading from the N-terminus, the 217-residue chain is Flagellar L-ring protein 2 (217 aa).

The N-terminal stretch at 1–15 (MRILLALTWLAWLGA) is a signal peptide. C16 carries the N-palmitoyl cysteine lipid modification. C16 carries the S-diacylglycerol cysteine lipid modification.

This sequence belongs to the FlgH family. The basal body constitutes a major portion of the flagellar organelle and consists of four rings (L,P,S, and M) mounted on a central rod.

The protein resides in the cell outer membrane. Its subcellular location is the bacterial flagellum basal body. Its function is as follows. Assembles around the rod to form the L-ring and probably protects the motor/basal body from shearing forces during rotation. The polypeptide is Flagellar L-ring protein 2 (Burkholderia thailandensis (strain ATCC 700388 / DSM 13276 / CCUG 48851 / CIP 106301 / E264)).